A 503-amino-acid chain; its full sequence is MEEFQGYLELDRSRQHYLLYPLLFREYIYALAHDHGLNRSILFESAGYDNKSSSIIVKRLITRMYQQNPLIFSAKDSIQNQFFGHNKNLYSQILSEGFAVIVEIPFSLRFLFLLERKEIAKSYHLRSIHSIFSFLEDKFTHLDYVSDVLIPYHIHLEILVQTLRYWVKDASSLHLLRLFLHDYWNSFITPKKHITFFFKGNPRLFLFLYNSHICEYEYIFLFLRNQSSHLRSTSSGIFFERIHFYVKIEHFVKVFFDNNFQCILWFLKDPFMHYVRYQGKFFMASKDTPLLMNKWKCYLVNLWQYHFSVWFQPGRIDINRLCKYSLDFLGYRSSVRLNSSVVRSQMLENLFLINNAMKKFETIVPIIPLIGSLYKSNFCNTFGHPISKPTRTHSSDSDIIDRFLRICRNLSHYHSGSSKKKSLYRVKYILRLSCVKTLARKHKRTVRTFVKRLGSEFLEEFLTEEEVFLSLIFPRTYSTSRRLYRGQIWYLDITSINDLVNYE.

The protein belongs to the intron maturase 2 family. MatK subfamily.

It localises to the plastid. The protein resides in the chloroplast. Usually encoded in the trnK tRNA gene intron. Probably assists in splicing its own and other chloroplast group II introns. The polypeptide is Maturase K (Kunzea pulchella (Red kunzea)).